A 252-amino-acid chain; its full sequence is tRNA (guanine-N(1)-)-methyltransferase (252 aa).

S-adenosyl-L-methionine contacts are provided by residues Gly-113 and 133–138 (IGDYVL).

Belongs to the RNA methyltransferase TrmD family. Homodimer.

The protein resides in the cytoplasm. The catalysed reaction is guanosine(37) in tRNA + S-adenosyl-L-methionine = N(1)-methylguanosine(37) in tRNA + S-adenosyl-L-homocysteine + H(+). Functionally, specifically methylates guanosine-37 in various tRNAs. The chain is tRNA (guanine-N(1)-)-methyltransferase from Xanthomonas campestris pv. campestris (strain 8004).